A 375-amino-acid chain; its full sequence is Queuine tRNA-ribosyltransferase (375 aa).

The active-site Proton acceptor is Asp89. Substrate-binding positions include 89–93, Asp143, Gln187, and Gly214; that span reads DSGGF. Positions 245-251 are RNA binding; that stretch reads GVGKPED. Asp264 functions as the Nucleophile in the catalytic mechanism. The tract at residues 269–273 is RNA binding; important for wobble base 34 recognition; it reads TRNAR. Positions 302, 304, 307, and 333 each coordinate Zn(2+).

Belongs to the queuine tRNA-ribosyltransferase family. In terms of assembly, homodimer. Within each dimer, one monomer is responsible for RNA recognition and catalysis, while the other monomer binds to the replacement base PreQ1. Zn(2+) is required as a cofactor.

The catalysed reaction is 7-aminomethyl-7-carbaguanine + guanosine(34) in tRNA = 7-aminomethyl-7-carbaguanosine(34) in tRNA + guanine. It participates in tRNA modification; tRNA-queuosine biosynthesis. Catalyzes the base-exchange of a guanine (G) residue with the queuine precursor 7-aminomethyl-7-deazaguanine (PreQ1) at position 34 (anticodon wobble position) in tRNAs with GU(N) anticodons (tRNA-Asp, -Asn, -His and -Tyr). Catalysis occurs through a double-displacement mechanism. The nucleophile active site attacks the C1' of nucleotide 34 to detach the guanine base from the RNA, forming a covalent enzyme-RNA intermediate. The proton acceptor active site deprotonates the incoming PreQ1, allowing a nucleophilic attack on the C1' of the ribose to form the product. After dissociation, two additional enzymatic reactions on the tRNA convert PreQ1 to queuine (Q), resulting in the hypermodified nucleoside queuosine (7-(((4,5-cis-dihydroxy-2-cyclopenten-1-yl)amino)methyl)-7-deazaguanosine). The polypeptide is Queuine tRNA-ribosyltransferase (Salmonella agona (strain SL483)).